Reading from the N-terminus, the 459-residue chain is Pup--protein ligase (459 aa).

Residue E9 participates in Mg(2+) binding. R54 is a binding site for ATP. Y56 contacts Mg(2+). D58 (proton acceptor) is an active-site residue. E64 contacts Mg(2+). ATP-binding residues include T67 and W421.

It belongs to the Pup ligase/Pup deamidase family. Pup-conjugating enzyme subfamily.

It catalyses the reaction ATP + [prokaryotic ubiquitin-like protein]-L-glutamate + [protein]-L-lysine = ADP + phosphate + N(6)-([prokaryotic ubiquitin-like protein]-gamma-L-glutamyl)-[protein]-L-lysine.. It functions in the pathway protein degradation; proteasomal Pup-dependent pathway. The protein operates within protein modification; protein pupylation. Catalyzes the covalent attachment of the prokaryotic ubiquitin-like protein modifier Pup to the proteasomal substrate proteins, thereby targeting them for proteasomal degradation. This tagging system is termed pupylation. The ligation reaction involves the side-chain carboxylate of the C-terminal glutamate of Pup and the side-chain amino group of a substrate lysine. In Jonesia denitrificans (strain ATCC 14870 / DSM 20603 / BCRC 15368 / CIP 55.134 / JCM 11481 / NBRC 15587 / NCTC 10816 / Prevot 55134) (Listeria denitrificans), this protein is Pup--protein ligase.